Reading from the N-terminus, the 70-residue chain is Large ribosomal subunit protein bL31 (70 aa).

Zn(2+) contacts are provided by Cys-16, Cys-18, Cys-36, and Cys-39.

It belongs to the bacterial ribosomal protein bL31 family. Type A subfamily. As to quaternary structure, part of the 50S ribosomal subunit. Zn(2+) serves as cofactor.

Its function is as follows. Binds the 23S rRNA. This chain is Large ribosomal subunit protein bL31, found in Fervidobacterium nodosum (strain ATCC 35602 / DSM 5306 / Rt17-B1).